A 468-amino-acid chain; its full sequence is Transmembrane protein 151B (468 aa).

Positions 1–25 are disordered; it reads MPEDGGGDSGDVPEIIPDGEPLREE. A run of 2 helical transmembrane segments spans residues 45–65 and 98–118; these read CLLLTLLIHACGAVVAWCRLA and YLYIPLAFVSLLYLLYLAECW. The segment at 384–438 is disordered; the sequence is VSSNSLPPARPSGPRLPFSRSRLSLGAGGRATPGVFRSLSGGPLGRRGEDTEPLE.

It belongs to the TMEM151 family.

It is found in the membrane. The polypeptide is Transmembrane protein 151B (TMEM151B) (Bos taurus (Bovine)).